Consider the following 455-residue polypeptide: Kynurenine--oxoglutarate transaminase 3 (455 aa).

Gly-72 lines the substrate pocket. At Lys-117 the chain carries N6-acetyllysine; alternate. The residue at position 117 (Lys-117) is an N6-succinyllysine; alternate. Asn-219 provides a ligand contact to substrate. Lys-281 is subject to N6-(pyridoxal phosphate)lysine. A substrate-binding site is contributed by Arg-430.

The protein belongs to the class-I pyridoxal-phosphate-dependent aminotransferase family. In terms of assembly, homodimer. The cofactor is pyridoxal 5'-phosphate. Widely expressed, with higher expression levels in liver, kidney, heart and neuroendocrine tissues.

The enzyme catalyses L-kynurenine + 2-oxoglutarate = kynurenate + L-glutamate + H2O. It catalyses the reaction L-kynurenine + glyoxylate = kynurenate + glycine + H2O. The catalysed reaction is 3-hydroxy-L-kynurenine + glyoxylate = xanthurenate + glycine + H2O. It carries out the reaction an S-substituted L-cysteine + H2O = a thiol + pyruvate + NH4(+). Its pathway is amino-acid degradation; L-kynurenine degradation; kynurenate from L-kynurenine: step 1/2. Kynurenine transamination is competitively inhibited by cysteine, glutamine, histidine, methionine, leucine, or phenylalanine. In terms of biological role, catalyzes the irreversible transamination of the L-tryptophan metabolite L-kynurenine to form kynurenic acid (KA), an intermediate in the tryptophan catabolic pathway which is also a broad spectrum antagonist of the three ionotropic excitatory amino acid receptors among others. May catalyze the beta-elimination of S-conjugates and Se-conjugates of L-(seleno)cysteine, resulting in the cleavage of the C-S or C-Se bond. Has transaminase activity towards L-kynurenine, tryptophan, phenylalanine, serine, cysteine, methionine, histidine, glutamine and asparagine with glyoxylate as an amino group acceptor (in vitro). Has lower activity with 2-oxoglutarate as amino group acceptor (in vitro). This is Kynurenine--oxoglutarate transaminase 3 (Kyat3) from Mus musculus (Mouse).